Consider the following 279-residue polypeptide: MANLRAQILEELGARPTIDAADEIRKRVQFLKDYLLSTPAKGFVLGISGGQDSTLTGRLAQLAASELRDEGHDAEFVAVRLPYGTQADESDAQISLDFIKPDRSVVVNVKPGADATAKESSEALRHIIGDGGELRDFVRGNIKARERMVIQYSIAGQLGYLVVGTDHAAEAITGFFTKFGDGGVDVTPLTGLSKRQGAALLRELGAPESTWKKVPTADLEDDRPALPDEEALGVTYAQIDDYLEGKDVPDAVAQKLETMFLNTRHKRAVPVTPLDTWWR.

Position 46-53 (46-53) interacts with ATP; the sequence is GISGGQDS. D52 provides a ligand contact to Mg(2+). R145 lines the deamido-NAD(+) pocket. Position 165 (T165) interacts with ATP. A Mg(2+)-binding site is contributed by E170. K178 and D185 together coordinate deamido-NAD(+). Residues K194 and T216 each contribute to the ATP site. Deamido-NAD(+) is bound at residue 265–266; sequence HK.

This sequence belongs to the NAD synthetase family. Homodimer.

The enzyme catalyses deamido-NAD(+) + NH4(+) + ATP = AMP + diphosphate + NAD(+) + H(+). It participates in cofactor biosynthesis; NAD(+) biosynthesis; NAD(+) from deamido-NAD(+) (ammonia route): step 1/1. In terms of biological role, catalyzes the ATP-dependent amidation of deamido-NAD to form NAD. Uses ammonia as a nitrogen source. The protein is NH(3)-dependent NAD(+) synthetase of Rhodococcus jostii (strain RHA1).